The following is a 170-amino-acid chain: Shikimate kinase (170 aa).

11–16 lines the ATP pocket; it reads LSGKST. Mg(2+) is bound at residue serine 15. Residues aspartate 33, arginine 57, and glycine 79 each coordinate substrate. Arginine 119 serves as a coordination point for ATP. Substrate is bound at residue arginine 137.

It belongs to the shikimate kinase family. As to quaternary structure, monomer. The cofactor is Mg(2+).

It localises to the cytoplasm. The catalysed reaction is shikimate + ATP = 3-phosphoshikimate + ADP + H(+). It participates in metabolic intermediate biosynthesis; chorismate biosynthesis; chorismate from D-erythrose 4-phosphate and phosphoenolpyruvate: step 5/7. In terms of biological role, catalyzes the specific phosphorylation of the 3-hydroxyl group of shikimic acid using ATP as a cosubstrate. The chain is Shikimate kinase from Clostridium botulinum (strain Loch Maree / Type A3).